The sequence spans 203 residues: Orotate phosphoribosyltransferase (203 aa).

5-phospho-alpha-D-ribose 1-diphosphate is bound by residues Arg-94, Lys-98, His-100, and 120 to 128 (EDLISTGGS). Ser-124 contacts orotate.

This sequence belongs to the purine/pyrimidine phosphoribosyltransferase family. PyrE subfamily. As to quaternary structure, homodimer. Mg(2+) is required as a cofactor.

The catalysed reaction is orotidine 5'-phosphate + diphosphate = orotate + 5-phospho-alpha-D-ribose 1-diphosphate. It functions in the pathway pyrimidine metabolism; UMP biosynthesis via de novo pathway; UMP from orotate: step 1/2. In terms of biological role, catalyzes the transfer of a ribosyl phosphate group from 5-phosphoribose 1-diphosphate to orotate, leading to the formation of orotidine monophosphate (OMP). This is Orotate phosphoribosyltransferase from Staphylococcus epidermidis (strain ATCC 35984 / DSM 28319 / BCRC 17069 / CCUG 31568 / BM 3577 / RP62A).